The chain runs to 620 residues: Translation initiation factor IF-2 (620 aa).

One can recognise a tr-type G domain in the interval 119–288 (ERPPIVTIMG…IILISELENL (170 aa)). The tract at residues 128–135 (GHVDHGKT) is G1. 128–135 (GHVDHGKT) lines the GTP pocket. A G2 region spans residues 153-157 (GITQA). The segment at 175-178 (DTPG) is G3. Residues 175–179 (DTPGH) and 229–232 (NKID) contribute to the GTP site. Residues 229-232 (NKID) form a G4 region. The interval 265 to 267 (SAI) is G5.

It belongs to the TRAFAC class translation factor GTPase superfamily. Classic translation factor GTPase family. IF-2 subfamily.

Its subcellular location is the cytoplasm. One of the essential components for the initiation of protein synthesis. Protects formylmethionyl-tRNA from spontaneous hydrolysis and promotes its binding to the 30S ribosomal subunits. Also involved in the hydrolysis of GTP during the formation of the 70S ribosomal complex. This is Translation initiation factor IF-2 from Mycoplasma capricolum subsp. capricolum (strain California kid / ATCC 27343 / NCTC 10154).